We begin with the raw amino-acid sequence, 369 residues long: Aminomethyltransferase (369 aa).

Belongs to the GcvT family. In terms of assembly, the glycine cleavage system is composed of four proteins: P, T, L and H.

The enzyme catalyses N(6)-[(R)-S(8)-aminomethyldihydrolipoyl]-L-lysyl-[protein] + (6S)-5,6,7,8-tetrahydrofolate = N(6)-[(R)-dihydrolipoyl]-L-lysyl-[protein] + (6R)-5,10-methylene-5,6,7,8-tetrahydrofolate + NH4(+). In terms of biological role, the glycine cleavage system catalyzes the degradation of glycine. In Xanthomonas oryzae pv. oryzae (strain MAFF 311018), this protein is Aminomethyltransferase.